The following is a 308-amino-acid chain: Ribosomal RNA small subunit methyltransferase H (308 aa).

S-adenosyl-L-methionine contacts are provided by residues 32–34, Asp51, Phe78, Asp99, and Gln106; that span reads AGH.

The protein belongs to the methyltransferase superfamily. RsmH family.

It localises to the cytoplasm. The enzyme catalyses cytidine(1402) in 16S rRNA + S-adenosyl-L-methionine = N(4)-methylcytidine(1402) in 16S rRNA + S-adenosyl-L-homocysteine + H(+). Specifically methylates the N4 position of cytidine in position 1402 (C1402) of 16S rRNA. This is Ribosomal RNA small subunit methyltransferase H from Mesoplasma florum (strain ATCC 33453 / NBRC 100688 / NCTC 11704 / L1) (Acholeplasma florum).